Reading from the N-terminus, the 369-residue chain is Cyclin-I2 (369 aa).

The segment at 1-116 (MASGAQLPPQ…SRKPRNLEGD (116 aa)) is disordered. 2 stretches are compositionally biased toward low complexity: residues 64 to 76 (AASL…AVPV) and 83 to 101 (APAG…EQAP).

This sequence belongs to the cyclin family.

The chain is Cyclin-I2 (CCNI2) from Homo sapiens (Human).